Reading from the N-terminus, the 325-residue chain is Treponemal membrane protein B (325 aa).

A signal peptide spans 1-24; sequence MKTRNFSLVSALYVLLGVPLFVSA. An EAARKAAE repeat occupies 159-166; it reads EAARKAAE. The ARKLEEQRIAAQKAQEERKRAEE repeat unit spans residues 167 to 189; the sequence is ARKLEEQRIAAQKAQEERKRAEE. The segment at 176–224 is disordered; that stretch reads AAQKAQEERKRAEEEAARKAAEARKLEEQRIAAQKAQEERKRAEEEAAR. An EAARKAAE repeat occupies 190-197; that stretch reads EAARKAAE. An ARKLEEQRIAAQKAQEERKRAEE repeat occupies 198–220; the sequence is ARKLEEQRIAAQKAQEERKRAEE. Residues 221–228 form an EAARKAAE repeat; the sequence is EAARKAAE. The EAARKAEE repeat unit spans residues 229 to 236; that stretch reads EAARKAEE.

To T.phagedenis TmpB.

The protein resides in the cell outer membrane. In terms of biological role, tmp may serve as a porin or transport protein for large molecules. The chain is Treponemal membrane protein B (tmpB) from Treponema pallidum (strain Nichols).